A 147-amino-acid chain; its full sequence is Arginine repressor (147 aa).

Belongs to the ArgR family.

The protein localises to the cytoplasm. Its pathway is amino-acid biosynthesis; L-arginine biosynthesis [regulation]. Regulates arginine biosynthesis genes. This chain is Arginine repressor, found in Chlamydia caviae (strain ATCC VR-813 / DSM 19441 / 03DC25 / GPIC) (Chlamydophila caviae).